We begin with the raw amino-acid sequence, 559 residues long: DNA primase (559 aa).

The CHC2-type zinc-finger motif lies at 37–61 (CPFHEERSASFSVNQVKGFYYCFGC). The Toprim domain occupies 246–327 (KQVIVTEGYL…KGGVILFENN (82 aa)). Glu252, Asp296, and Asp298 together coordinate Mg(2+).

It belongs to the DnaG primase family. In terms of assembly, monomer. Interacts with DnaB. Zn(2+) is required as a cofactor. It depends on Mg(2+) as a cofactor.

It carries out the reaction ssDNA + n NTP = ssDNA/pppN(pN)n-1 hybrid + (n-1) diphosphate.. Its function is as follows. RNA polymerase that catalyzes the synthesis of short RNA molecules used as primers for DNA polymerase during DNA replication. The chain is DNA primase from Helicobacter pylori (strain J99 / ATCC 700824) (Campylobacter pylori J99).